The primary structure comprises 310 residues: Vomeronasal type-1 receptor 101 (310 aa).

Over 1-19 (MNKVNILPSDTNMKITLFS) the chain is Extracellular. The chain crosses the membrane as a helical span at residues 20 to 40 (ELSVGISANSILFFAHLCMFF). Residues 41-49 (EENRSKPID) lie on the Cytoplasmic side of the membrane. Residues 50–70 (LCIAFLSLTQLMLLVTMGLIA) form a helical membrane-spanning segment. Residues 71-93 (ADMFMAQGIWDITTCRSLIYFHR) lie on the Extracellular side of the membrane. Cysteine 85 and cysteine 172 are disulfide-bonded. The helical transmembrane segment at 94-114 (LLRGFNLCAACLLHILWTFTL) threads the bilayer. Over 115-134 (SPRSSCLTKFKHKSPHHISG) the chain is Cytoplasmic. The chain crosses the membrane as a helical span at residues 135–155 (AYLFFCVLYMSFSSHLFVLVI). Residues 156-193 (ATSNLTSDHFMYVTQSCSLLPMSYSRTSTFSLLMVTRE) lie on the Extracellular side of the membrane. Asparagine 159 carries an N-linked (GlcNAc...) asparagine glycan. A helical membrane pass occupies residues 194-214 (VFLISLMALSSGYMVTLLWRH). The Cytoplasmic segment spans residues 215 to 238 (KKQAQHLHSTRLSSKASPQQRATR). The helical transmembrane segment at 239–259 (TILLLMTFFVVFYILGTVIFH) threads the bilayer. At 260-268 (SRTKFKDGS) the chain is on the extracellular side. Residues 269-289 (IFYCVQIIVSHSYATISPFVF) traverse the membrane as a helical segment. Residues 290–310 (VFSEKRIIKFFRSMCGRIVNT) lie on the Cytoplasmic side of the membrane.

It belongs to the G-protein coupled receptor 1 family. Expressed in 1-4% of neurons of the vomeronasal organ. Only one pheromone receptor gene may be expressed in a particular neuron. Not expressed in the main olfactory epithelium.

The protein localises to the cell membrane. Functionally, putative pheromone receptor implicated in the regulation of social as well as reproductive behavior. The chain is Vomeronasal type-1 receptor 101 (Vom1r101) from Rattus norvegicus (Rat).